Here is a 330-residue protein sequence, read N- to C-terminus: Ketol-acid reductoisomerase (NADP(+)) (330 aa).

The KARI N-terminal Rossmann domain maps to 1–181 (MKVLYDDDVN…GLTRAGVIET (181 aa)). NADP(+) is bound by residues 24 to 27 (YGSQ), Arg-47, Ser-52, and 82 to 85 (DEIQ). The active site involves His-107. NADP(+) is bound at residue Gly-133. Positions 182-327 (TYREETETDL…KNLRIACGLQ (146 aa)) constitute a KARI C-terminal knotted domain. The Mg(2+) site is built by Asp-190, Glu-194, Glu-226, and Glu-230. Ser-251 lines the substrate pocket.

The protein belongs to the ketol-acid reductoisomerase family. Requires Mg(2+) as cofactor.

The enzyme catalyses (2R)-2,3-dihydroxy-3-methylbutanoate + NADP(+) = (2S)-2-acetolactate + NADPH + H(+). The catalysed reaction is (2R,3R)-2,3-dihydroxy-3-methylpentanoate + NADP(+) = (S)-2-ethyl-2-hydroxy-3-oxobutanoate + NADPH + H(+). The protein operates within amino-acid biosynthesis; L-isoleucine biosynthesis; L-isoleucine from 2-oxobutanoate: step 2/4. Its pathway is amino-acid biosynthesis; L-valine biosynthesis; L-valine from pyruvate: step 2/4. In terms of biological role, involved in the biosynthesis of branched-chain amino acids (BCAA). Catalyzes an alkyl-migration followed by a ketol-acid reduction of (S)-2-acetolactate (S2AL) to yield (R)-2,3-dihydroxy-isovalerate. In the isomerase reaction, S2AL is rearranged via a Mg-dependent methyl migration to produce 3-hydroxy-3-methyl-2-ketobutyrate (HMKB). In the reductase reaction, this 2-ketoacid undergoes a metal-dependent reduction by NADPH to yield (R)-2,3-dihydroxy-isovalerate. This is Ketol-acid reductoisomerase (NADP(+)) from Methanosphaera stadtmanae (strain ATCC 43021 / DSM 3091 / JCM 11832 / MCB-3).